We begin with the raw amino-acid sequence, 539 residues long: Chaperonin GroEL (539 aa).

Residues 30-33 (TLGP), 87-91 (DGTTT), Gly-414, 479-481 (DAL), and Asp-495 each bind ATP.

It belongs to the chaperonin (HSP60) family. As to quaternary structure, forms a cylinder of 14 subunits composed of two heptameric rings stacked back-to-back. Interacts with the co-chaperonin GroES.

The protein localises to the cytoplasm. It carries out the reaction ATP + H2O + a folded polypeptide = ADP + phosphate + an unfolded polypeptide.. Its function is as follows. Together with its co-chaperonin GroES, plays an essential role in assisting protein folding. The GroEL-GroES system forms a nano-cage that allows encapsulation of the non-native substrate proteins and provides a physical environment optimized to promote and accelerate protein folding. The protein is Chaperonin GroEL of Caldicellulosiruptor bescii (strain ATCC BAA-1888 / DSM 6725 / KCTC 15123 / Z-1320) (Anaerocellum thermophilum).